The chain runs to 332 residues: uncharacterized protein (332 aa).

This sequence belongs to the peptidase U32 family.

This is an uncharacterized protein from Methanocaldococcus jannaschii (strain ATCC 43067 / DSM 2661 / JAL-1 / JCM 10045 / NBRC 100440) (Methanococcus jannaschii).